The primary structure comprises 914 residues: MNLTLTRRLWMGFALMALLTLTSTLVGWYNLRFISQVEKDNTQALIPTMNMARQLSEASAWELFAAQNLTSADNEKMWQAQGRMLTAQSLKINALLQALREQGFDTTAIEQQEQEISRSLRQQGELVGQRLQLRQQQQQLSQQIVAAADEIARLAQGQANNATTSAGATQAGIYDLIEQDQRQAAESALDRLIDIDLEYVNQMNELRLSALRVQQMVMNLGLEQIQKNAPTLEKQLNNAVKILQRRQIRIEDPGVRAQVATTLTTVSQYSDLLALYQQDSEISNHLQTLAQNNIAQFAQFSSEVSQLVDTIELRNQHGLAHLEKASARGQYSLLLLGMVSLCALILILWRVVYRSVTRPLAEQTQALQRLLDGDIDSPFPETAGVRELDTIGRLMDAFRSNVHALNRHREQLAAQVKARTAELQELVIEHRQARAEAEKASQAKSAFLAAMSHEIRTPLYGILGTAQLLADNPALNAQRDDLRAITDSGESLLTILNDILDYSAIEAGGKNVSVSDEPFEPRPLLESTLQLMSGRVKGRPIRLATAIADDMPCALMGDPRRIRQVITNLLSNALRFTDEGYIILRSRTDGEQWLVEVEDSGCGIDPAKLAEIFQPFVQVSGKRGGTGLGLTISSRLAQAMGGELSATSTPEVGSCFCLRLPLRVATAPVPKTVNQAVRLDGLRLLLIEDNPLTQRITIEMLKTSGAQIVAVGNAAQALETLQNSEPFAAALVDFDLPDIDGITLARQLAQQYPSLVLIGFSAHVIDETLRQRTSSLFRGIIPKPVPREVLGQLLAHYLQLQVNNDQSLDVSQLNEDAQLMGTEKIHEWLVLFTQHALPLLDEIDIARASQDSEKIKRAAHQLKSSCSSLGMHIASQLCAQLEQQPLSAPLPHEEITRSVAALEAWLHKKDLNAI.

Residues 1–8 (MNLTLTRR) lie on the Cytoplasmic side of the membrane. A helical membrane pass occupies residues 9–29 (LWMGFALMALLTLTSTLVGWY). The Periplasmic portion of the chain corresponds to 30 to 332 (NLRFISQVEK…EKASARGQYS (303 aa)). Residues 333–353 (LLLLGMVSLCALILILWRVVY) traverse the membrane as a helical segment. Residues 354–407 (RSVTRPLAEQTQALQRLLDGDIDSPFPETAGVRELDTIGRLMDAFRSNVHALNR) enclose the HAMP domain. The Cytoplasmic segment spans residues 354 to 914 (RSVTRPLAEQ…WLHKKDLNAI (561 aa)). The region spanning 450-664 (AMSHEIRTPL…CFCLRLPLRV (215 aa)) is the Histidine kinase domain. Residue histidine 453 is modified to Phosphohistidine; by autocatalysis. A Response regulatory domain is found at 683–798 (RLLLIEDNPL…VLGQLLAHYL (116 aa)). At aspartate 733 the chain carries 4-aspartylphosphate. The region spanning 821 to 914 (GTEKIHEWLV…WLHKKDLNAI (94 aa)) is the HPt domain. Histidine 860 is subject to Phosphohistidine.

In terms of assembly, may form homomultimers. Seems to interact with TorT and TorC apocytochrome. In terms of processing, activation requires a sequential transfer of a phosphate group from a His in the primary transmitter domain, to an Asp in the receiver domain and to a His in the secondary transmitter domain.

The protein localises to the cell inner membrane. It catalyses the reaction ATP + protein L-histidine = ADP + protein N-phospho-L-histidine.. Inhibited by TorC apocytochrome. Member of the two-component regulatory system TorS/TorR involved in the anaerobic utilization of trimethylamine-N-oxide (TMAO). Detects the presence of TMAO in the medium and, in response, activates TorR via a four-step phosphorelay. When TMAO is removed, TorS can dephosphorylate TorR, probably by a reverse phosphorelay involving His-860 and Asp-733. The chain is Sensor protein TorS (torS) from Escherichia coli (strain K12).